The following is a 134-amino-acid chain: 6,7-dimethyl-8-ribityllumazine synthase (134 aa).

5-amino-6-(D-ribitylamino)uracil contacts are provided by residues Phe-12, Val-44–Asp-46, and Ser-68–Ile-70. Glu-73 to Thr-74 is a (2S)-2-hydroxy-3-oxobutyl phosphate binding site. His-76 acts as the Proton donor in catalysis. Leu-101 lines the 5-amino-6-(D-ribitylamino)uracil pocket. Arg-116 is a binding site for (2S)-2-hydroxy-3-oxobutyl phosphate.

Belongs to the DMRL synthase family.

The catalysed reaction is (2S)-2-hydroxy-3-oxobutyl phosphate + 5-amino-6-(D-ribitylamino)uracil = 6,7-dimethyl-8-(1-D-ribityl)lumazine + phosphate + 2 H2O + H(+). The protein operates within cofactor biosynthesis; riboflavin biosynthesis; riboflavin from 2-hydroxy-3-oxobutyl phosphate and 5-amino-6-(D-ribitylamino)uracil: step 1/2. In terms of biological role, catalyzes the formation of 6,7-dimethyl-8-ribityllumazine by condensation of 5-amino-6-(D-ribitylamino)uracil with 3,4-dihydroxy-2-butanone 4-phosphate. This is the penultimate step in the biosynthesis of riboflavin. The sequence is that of 6,7-dimethyl-8-ribityllumazine synthase from Methanosarcina acetivorans (strain ATCC 35395 / DSM 2834 / JCM 12185 / C2A).